A 1392-amino-acid polypeptide reads, in one-letter code: ATP-dependent helicase/nuclease subunit A (1392 aa).

One can recognise a UvrD-like helicase ATP-binding domain in the interval 4–595 (FKPTPAQSKA…IVLGENFRSM (592 aa)). Residue 25–32 (ASAGSGKT) participates in ATP binding. The UvrD-like helicase C-terminal domain occupies 623–929 (AHLKYAATYY…NVMTIHGSKG (307 aa)).

It belongs to the helicase family. AddA subfamily. In terms of assembly, heterodimer of AddA and AddB/RexB. The cofactor is Mg(2+).

The catalysed reaction is Couples ATP hydrolysis with the unwinding of duplex DNA by translocating in the 3'-5' direction.. It carries out the reaction ATP + H2O = ADP + phosphate + H(+). The heterodimer acts as both an ATP-dependent DNA helicase and an ATP-dependent, dual-direction single-stranded exonuclease. Recognizes the chi site generating a DNA molecule suitable for the initiation of homologous recombination. The AddA nuclease domain is required for chi fragment generation; this subunit has the helicase and 3' -&gt; 5' nuclease activities. This is ATP-dependent helicase/nuclease subunit A from Limosilactobacillus reuteri subsp. reuteri (strain JCM 1112) (Lactobacillus reuteri).